Consider the following 97-residue polypeptide: Large ribosomal subunit protein bL27 (97 aa).

The tract at residues 1-23 (MAHKKGASSSRNGRDSTSKRLGV) is disordered.

Belongs to the bacterial ribosomal protein bL27 family.

The polypeptide is Large ribosomal subunit protein bL27 (Acidothermus cellulolyticus (strain ATCC 43068 / DSM 8971 / 11B)).